A 131-amino-acid polypeptide reads, in one-letter code: T3C protein (131 aa).

This chain is T3C protein, found in Ovis aries (Sheep).